The chain runs to 396 residues: Serine/threonine-protein kinase 32A (396 aa).

A lipid anchor (N-myristoyl glycine) is attached at Gly-2. In terms of domain architecture, Protein kinase spans 23–281 (FEILRAIGKG…LSDVQNFPYM (259 aa)). ATP contacts are provided by residues 29-37 (IGKGSFGKV) and Lys-52. Asp-146 functions as the Proton acceptor in the catalytic mechanism. The interval 373-396 (KRQPNLALEQTKDPQGEDGQNNNL) is disordered.

The protein belongs to the protein kinase superfamily. Ser/Thr protein kinase family. It depends on Mg(2+) as a cofactor.

The protein localises to the cell membrane. It carries out the reaction L-seryl-[protein] + ATP = O-phospho-L-seryl-[protein] + ADP + H(+). The catalysed reaction is L-threonyl-[protein] + ATP = O-phospho-L-threonyl-[protein] + ADP + H(+). The protein is Serine/threonine-protein kinase 32A (STK32A) of Homo sapiens (Human).